Here is a 141-residue protein sequence, read N- to C-terminus: Hemoglobin subunit alpha-D (141 aa).

Residues 1–141 (MLTEDEKQLI…VSAVLAEKYR (141 aa)) form the Globin domain. Positions 58 and 87 each coordinate heme b.

Belongs to the globin family. Heterotetramer of two alpha-D chains and two beta chains. In terms of tissue distribution, red blood cells.

Its function is as follows. Involved in oxygen transport from the lung to the various peripheral tissues. This chain is Hemoglobin subunit alpha-D (HBAD), found in Chelonoidis carbonarius (Red-footed tortoise).